The primary structure comprises 264 residues: Carbonic anhydrase 7 (264 aa).

The 258-residue stretch at 5–262 (HGWGYGQDDG…LKGRVVKASF (258 aa)) folds into the Alpha-carbonic anhydrase domain. The active-site Proton donor/acceptor is the His66. Residues His96, His98, and His121 each coordinate Zn(2+). 201-202 (TT) is a substrate binding site.

This sequence belongs to the alpha-carbonic anhydrase family. Zn(2+) serves as cofactor.

The protein localises to the cytoplasm. The catalysed reaction is hydrogencarbonate + H(+) = CO2 + H2O. Activated by histamine, L-adrenaline, L- and D-histidine, and L- and D-phenylalanine. Inhibited by coumarins, sulfonamide derivatives such as acetazolamide (AZA), by saccharin and Foscarnet (phosphonoformate trisodium salt). Reversible hydration of carbon dioxide. The sequence is that of Carbonic anhydrase 7 (CA7) from Homo sapiens (Human).